The primary structure comprises 100 residues: Urease subunit gamma (100 aa).

This sequence belongs to the urease gamma subunit family. As to quaternary structure, heterotrimer of UreA (gamma), UreB (beta) and UreC (alpha) subunits. Three heterotrimers associate to form the active enzyme.

It localises to the cytoplasm. It catalyses the reaction urea + 2 H2O + H(+) = hydrogencarbonate + 2 NH4(+). The protein operates within nitrogen metabolism; urea degradation; CO(2) and NH(3) from urea (urease route): step 1/1. The chain is Urease subunit gamma from Thioalkalivibrio sulfidiphilus (strain HL-EbGR7).